Here is a 968-residue protein sequence, read N- to C-terminus: MPFTLGQRWISDTESELGLGTVVAVDARTVTLLFPSTGENRLYARSDSPVTRVMFNPGDTITSHDGWQMQVEEVKEENGLLTYIGTRLDTEESGVALREVFLDSKLVFSKPQDRLFAGQIDRMDRFALRYRARKYSSEQFRMPYSGLRGQRTSLIPHQLNIAHDVGRRHAPRVLLADEVGLGKTIEAGMILHQQLLSGAAERVLIIVPETLQHQWLVEMLRRFNLRFALFDDERYAEAQHDAYNPFDTEQLVICSLDFARRSKQRLEHLCEAEWDLLVVDEAHHLVWSEDAPSREYQAIEQLAEHVPGVLLLTATPEQLGMESHFARLRLLDPNRFHDFAQFVEEQKNYRPVADAVAMLLAGNKLSNDELNMLGEMIGEQDIEPLLQAANSDSEDAQSARQELVSMLMDRHGTSRVLFRNTRNGVKGFPKRELHTIKLPLPTQYQTAIKVSGIMGARKSAEDRARDMLYPERIYQEFEGDNATWWNFDPRVEWLMGYLTSHRSQKVLVICAKAATALQLEQVLREREGIRAAVFHEGMSIIERDRAAAWFAEEDTGAQVLLCSEIGSEGRNFQFASHMVMFDLPFNPDLLEQRIGRLDRIGQAHDIQIHVPYLEKTAQSVLVRWYHEGLDAFEHTCPTGRTIYDSVYNDLINYLASPDETEGFDDLIKNCREQHEALKAQLEQGRDRLLEIHSNGGEKAQALAESIEEQDDDTNLIAFAMNLFDIIGINQDDRGDNMIVLTPSDHMLVPDFPGLSEDGITITFDREVALAREDAQFITWEHPLIRNGLDLILSGDTGSSTISLLKNKALPVGTLLVELIYVVEAQAPKQLQLNRFLPPTPVRMLLDKNGNNLAAQVEFETFNRQLNAVNRHTGSKLVNAVQQDVHAILQLGEAQIEKSARALIDAARNEADEKLSAELSRLEALRAVNPNIRDDELTAIESNRQQVMESLDQAGWRLDALRLIVVTHQ.

The Helicase ATP-binding domain occupies 164–334 (DVGRRHAPRV…FARLRLLDPN (171 aa)). An ATP-binding site is contributed by 177–184 (DEVGLGKT). A DEAH box motif is present at residues 280 to 283 (DEAH). Positions 490–662 (RVEWLMGYLT…YLASPDETEG (173 aa)) constitute a Helicase C-terminal domain.

This sequence belongs to the SNF2/RAD54 helicase family. RapA subfamily. In terms of assembly, interacts with the RNAP. Has a higher affinity for the core RNAP than for the holoenzyme. Its ATPase activity is stimulated by binding to RNAP.

Its function is as follows. Transcription regulator that activates transcription by stimulating RNA polymerase (RNAP) recycling in case of stress conditions such as supercoiled DNA or high salt concentrations. Probably acts by releasing the RNAP, when it is trapped or immobilized on tightly supercoiled DNA. Does not activate transcription on linear DNA. Probably not involved in DNA repair. In Escherichia coli O127:H6 (strain E2348/69 / EPEC), this protein is RNA polymerase-associated protein RapA.